A 343-amino-acid chain; its full sequence is Hydroxycarboxylic acid receptor 1 (343 aa).

Residues 1 to 21 lie on the Extracellular side of the membrane; it reads MDNGSCCLIEGEPISQVMPPL. A glycan (N-linked (GlcNAc...) asparagine) is linked at asparagine 3. The helical transmembrane segment at 22-42 threads the bilayer; that stretch reads LILVFVLGALGNGIALCGFCF. The Cytoplasmic segment spans residues 43 to 49; sequence HMKTWKS. Residues 50-70 traverse the membrane as a helical segment; the sequence is STIYLFNLAVADFLLMICLPL. Topologically, residues 71–90 are extracellular; that stretch reads RTDYYLRRRHWIFGDIACRL. A disulfide bridge connects residues cysteine 88 and cysteine 165. Residues 91–111 form a helical membrane-spanning segment; the sequence is VLFKLAMNRAGSIVFLTVVAV. The Cytoplasmic portion of the chain corresponds to 112–131; it reads DRYFKVVHPHHMVNAISNRT. Residues 132–152 form a helical membrane-spanning segment; that stretch reads AAATACVLWTLVILGTVYLLM. The Extracellular segment spans residues 153–182; it reads ESHLCVQGTLSSCESFIMESANGWHDVMFQ. The helical transmembrane segment at 183 to 203 threads the bilayer; it reads LEFFLPLTIILFCSVNVVWSL. The Cytoplasmic segment spans residues 204–220; it reads RRRQQLTRQARMRRATR. The chain crosses the membrane as a helical span at residues 221-241; the sequence is FIMVVASVFITCYLPSVLARL. Over 242–259 the chain is Extracellular; the sequence is YFLWTVPTSACDPSVHTA. The chain crosses the membrane as a helical span at residues 260 to 280; the sequence is LHVTLSFTYLNSMLDPLVYYF. Topologically, residues 281-343 are cytoplasmic; that stretch reads SSPSLPKFYT…SDGQWDLQVC (63 aa). A compositionally biased stretch (polar residues) spans 319–334; it reads CSKSSIDGANRSQRPS. The segment at 319-343 is disordered; that stretch reads CSKSSIDGANRSQRPSDGQWDLQVC.

Belongs to the G-protein coupled receptor 1 family. In terms of tissue distribution, highly expressed in subcutaneous fat and omental fat and detectable in lower levels in brain and many other tissues. High levels detected in epididymal and subcutaneous fat with slightly lower in omental fat, low levels are detected in the brain, skeletal muscle, kidney, liver and the pancreas (at protein level).

The protein resides in the cell membrane. Functionally, acts as a receptor for L-lactate and mediates its anti-lipolytic effect through a G(i)-protein-mediated pathway. This Mus musculus (Mouse) protein is Hydroxycarboxylic acid receptor 1 (Hcar1).